The following is a 122-amino-acid chain: UPF0102 protein Gmet_2864 (122 aa).

This sequence belongs to the UPF0102 family.

This is UPF0102 protein Gmet_2864 from Geobacter metallireducens (strain ATCC 53774 / DSM 7210 / GS-15).